The following is a 290-amino-acid chain: 33 kDa chaperonin (290 aa).

2 disulfide bridges follow: Cys-231/Cys-233 and Cys-263/Cys-266.

Belongs to the HSP33 family. Under oxidizing conditions two disulfide bonds are formed involving the reactive cysteines. Under reducing conditions zinc is bound to the reactive cysteines and the protein is inactive.

The protein localises to the cytoplasm. Redox regulated molecular chaperone. Protects both thermally unfolding and oxidatively damaged proteins from irreversible aggregation. Plays an important role in the bacterial defense system toward oxidative stress. The chain is 33 kDa chaperonin from Thermotoga sp. (strain RQ2).